Here is a 235-residue protein sequence, read N- to C-terminus: uncharacterized protein (235 aa).

Residues 27–47 form a helical membrane-spanning segment; that stretch reads AMKLWSTWITLLILTFFCSEC. In terms of domain architecture, CX spans 124–185; that stretch reads YFWGESKYVP…CCGYDCCSNS (62 aa). Residues 187–207 traverse the membrane as a helical segment; sequence IFTSIFSLLVILLIVSVLSIF.

The protein localises to the membrane. This is an uncharacterized protein from Caenorhabditis elegans.